Consider the following 206-residue polypeptide: Small ribosomal subunit protein uS4 (206 aa).

Positions 98–163 (MRLDNVVYRL…SEKFKTFVEN (66 aa)) constitute an S4 RNA-binding domain.

It belongs to the universal ribosomal protein uS4 family. As to quaternary structure, part of the 30S ribosomal subunit. Contacts protein S5. The interaction surface between S4 and S5 is involved in control of translational fidelity.

Its function is as follows. One of the primary rRNA binding proteins, it binds directly to 16S rRNA where it nucleates assembly of the body of the 30S subunit. With S5 and S12 plays an important role in translational accuracy. This Clostridium botulinum (strain Alaska E43 / Type E3) protein is Small ribosomal subunit protein uS4.